Reading from the N-terminus, the 125-residue chain is PCNA-associated factor (125 aa).

The tract at residues 1 to 125 (MVRTKADSAG…SEEAADSDDE (125 aa)) is disordered. Residues 8–17 (SAGSSASSGS) are compositionally biased toward low complexity. A D-box motif is present at residues 28–39 (RKTFGSSSSGSN). The PIP-box motif lies at 68–79 (QKGIGEFFGSPS). The short motif at 85-87 (KEN) is the KEN box element. The Initiation motif motif lies at 95–107 (EAGGSGAGKAPRK). Residues 115–125 (PSEEAADSDDE) are compositionally biased toward acidic residues.

In terms of assembly, interacts with pcna.

The protein localises to the nucleus. It is found in the cytoplasm. It localises to the perinuclear region. Its function is as follows. PCNA-binding protein that acts as a regulator of DNA repair during DNA replication. Following DNA damage, the interaction with pcna is disrupted, facilitating the interaction between monoubiquitinated pcna and the translesion DNA synthesis DNA polymerase eta (polh) at stalled replisomes, facilitating the bypass of replication-fork-blocking lesions. Also acts as a regulator of centrosome number. This is PCNA-associated factor from Xenopus tropicalis (Western clawed frog).